Consider the following 643-residue polypeptide: Zinc finger protein 23 (643 aa).

Residues 1–43 (MLENYGNVASLGFPLLKPAVISQLEGGSELGGSSPLAAGTGLQ) enclose the KRAB domain. Residue K157 forms a Glycyl lysine isopeptide (Lys-Gly) (interchain with G-Cter in SUMO2) linkage. Residues 168–190 (FKCEELVEPFRCDSQLIQHQENN) form a C2H2-type 1; degenerate zinc finger. 16 consecutive C2H2-type zinc fingers follow at residues 196–218 (YQCS…QRLH), 224–246 (FKCV…QTIH), 252–274 (YQCK…QRIH), 280–302 (YQCK…QRVH), 308–330 (YECN…QRIH), 336–358 (YECN…QSIH), 364–386 (YQCK…QRIH), 392–414 (YECT…QRIH), 420–442 (YECN…LRIH), 448–470 (YECN…QRIH), 476–498 (FECN…HRIH), 504–526 (YQCK…QRIH), 532–554 (FKCM…QRIH), 560–582 (FQCK…QRSH), 588–610 (FRCV…QTVH), and 616–638 (YMCS…QSVH).

Belongs to the krueppel C2H2-type zinc-finger protein family.

The protein localises to the nucleus. May be involved in transcriptional regulation. May have a role in embryonic development. This Homo sapiens (Human) protein is Zinc finger protein 23 (ZNF23).